A 240-amino-acid polypeptide reads, in one-letter code: UDP-2,3-diacylglucosamine hydrolase (240 aa).

Aspartate 8, histidine 10, aspartate 41, asparagine 79, and histidine 114 together coordinate Mn(2+). Position 79-80 (79-80 (NR)) interacts with substrate. Positions 122, 160, 164, 167, and 195 each coordinate substrate. Histidine 195 and histidine 197 together coordinate Mn(2+).

Belongs to the LpxH family. Requires Mn(2+) as cofactor.

The protein resides in the cell inner membrane. Its subcellular location is the cytoplasm. It carries out the reaction UDP-2-N,3-O-bis[(3R)-3-hydroxytetradecanoyl]-alpha-D-glucosamine + H2O = 2-N,3-O-bis[(3R)-3-hydroxytetradecanoyl]-alpha-D-glucosaminyl 1-phosphate + UMP + 2 H(+). It functions in the pathway glycolipid biosynthesis; lipid IV(A) biosynthesis; lipid IV(A) from (3R)-3-hydroxytetradecanoyl-[acyl-carrier-protein] and UDP-N-acetyl-alpha-D-glucosamine: step 4/6. With respect to regulation, inhibited by a sulfonyl piperazine compound that shows antibacterial activity against E.coli; LpxH is the cellular target of this compound. Inhibited by 0.01% (or more) Triton X-100 in vitro. Its function is as follows. Hydrolyzes the pyrophosphate bond of UDP-2,3-diacylglucosamine to yield 2,3-diacylglucosamine 1-phosphate (lipid X) and UMP by catalyzing the attack of water at the alpha-P atom. Involved in the biosynthesis of lipid A, a phosphorylated glycolipid that anchors the lipopolysaccharide to the outer membrane of the cell. Is essential for E.coli growth. Does not cleave the unacylated UDP-GlcNAc, the mono-acylated UDP-3-O-(R)-3-hydroxymyristoyl-GlcNAc, and CDP-diacylglycerol. This Escherichia coli (strain K12) protein is UDP-2,3-diacylglucosamine hydrolase.